A 304-amino-acid chain; its full sequence is Voltage-dependent anion channel-forming protein YneE (304 aa).

4 helical membrane-spanning segments follow: residues 28–48 (LLLN…YTHL), 50–70 (IKFT…FLGF), 194–214 (VLAG…TLIL), and 220–240 (LFCI…TPFI).

The protein belongs to the anion channel-forming bestrophin (TC 1.A.46) family.

It localises to the cell membrane. The sequence is that of Voltage-dependent anion channel-forming protein YneE (yneE) from Escherichia coli (strain K12).